We begin with the raw amino-acid sequence, 404 residues long: tRNA/tmRNA (uracil-C(5))-methyltransferase (404 aa).

S-adenosyl-L-methionine-binding residues include Q218, Y251, N256, E272, and D332. The active-site Nucleophile is the C358. Residue E392 is the Proton acceptor of the active site.

This sequence belongs to the class I-like SAM-binding methyltransferase superfamily. RNA M5U methyltransferase family. TrmA subfamily.

It carries out the reaction uridine(54) in tRNA + S-adenosyl-L-methionine = 5-methyluridine(54) in tRNA + S-adenosyl-L-homocysteine + H(+). The enzyme catalyses uridine(341) in tmRNA + S-adenosyl-L-methionine = 5-methyluridine(341) in tmRNA + S-adenosyl-L-homocysteine + H(+). Functionally, dual-specificity methyltransferase that catalyzes the formation of 5-methyluridine at position 54 (m5U54) in all tRNAs, and that of position 341 (m5U341) in tmRNA (transfer-mRNA). The protein is tRNA/tmRNA (uracil-C(5))-methyltransferase of Helicobacter hepaticus (strain ATCC 51449 / 3B1).